A 334-amino-acid polypeptide reads, in one-letter code: Leucine carboxyl methyltransferase 1 (334 aa).

S-adenosyl-L-methionine-binding positions include lysine 37, arginine 73, glycine 98, aspartate 122, 171-172, and glutamate 198; that span reads DL.

The protein belongs to the methyltransferase superfamily. LCMT family.

It catalyses the reaction [phosphatase 2A protein]-C-terminal L-leucine + S-adenosyl-L-methionine = [phosphatase 2A protein]-C-terminal L-leucine methyl ester + S-adenosyl-L-homocysteine. Functionally, methylates the carboxyl group of the C-terminal leucine residue of protein phosphatase 2A catalytic subunits to form alpha-leucine ester residues. This Homo sapiens (Human) protein is Leucine carboxyl methyltransferase 1 (LCMT1).